We begin with the raw amino-acid sequence, 213 residues long: Ergothioneine transport ATP-binding protein EgtV (213 aa).

The 208-residue stretch at 5-212 (VTIENVSFNY…ATKTLEIKAL (208 aa)) folds into the ABC transporter domain. 37–44 (GESGSGKS) provides a ligand contact to ATP.

This sequence belongs to the ABC transporter superfamily. In terms of assembly, the complex is composed of two ATP-binding proteins (EgtV) and two transmembrane proteins (EgtU).

It localises to the cell inner membrane. It catalyses the reaction ergothioneine(out) + ATP + H2O = ergothioneine(in) + ADP + phosphate + H(+). Part of the ABC transporter complex EgtUV involved in the uptake of ergothioneine (EGT), a natural low-molecular weight (LMW) thiol antioxidant which protects H.pylori against bleach stress. Responsible for energy coupling to the transport system. This is Ergothioneine transport ATP-binding protein EgtV from Helicobacter pylori (strain G27).